The primary structure comprises 130 residues: Transcription antitermination protein NusB (130 aa).

The protein belongs to the NusB family.

Involved in transcription antitermination. Required for transcription of ribosomal RNA (rRNA) genes. Binds specifically to the boxA antiterminator sequence of the ribosomal RNA (rrn) operons. The protein is Transcription antitermination protein NusB of Sulfurovum sp. (strain NBC37-1).